Reading from the N-terminus, the 537-residue chain is Spore coat protein SP70 (537 aa).

Residues 1-20 form the signal peptide; the sequence is MRILKLAALSCLLFIAPSLS. Positions 21 to 140 constitute a DSCP-N domain; that stretch reads INCDGLSKDQ…CQIPATGGGP (120 aa). Residue asparagine 97 is glycosylated (N-linked (GlcNAc...) asparagine). The Follistatin-like 1 domain maps to 157-179; it reads SCDKVNCPNGYICTIVNQLAVCV. Positions 183-246 are disordered; it reads SSSSSSSSTT…GSHTTTGGST (64 aa). Follistatin-like domains follow at residues 250–272, 278–296, 358–380, and 389–415; these read TCGNVNCPRGYHCEVRGSQAVCV, SCANVDCGSGYHCKNGECI, TCKTVQCPKGYKCKLYADGPTCV, and TCKDMHCESNGLLCVLTPQKKTDEECC.

Phosphorylated and fucosylated.

This chain is Spore coat protein SP70 (cotB), found in Dictyostelium discoideum (Social amoeba).